Here is a 332-residue protein sequence, read N- to C-terminus: Glycerol-3-phosphate dehydrogenase [NAD(P)+] (332 aa).

Positions 15, 16, and 110 each coordinate NADPH. Positions 110, 137, and 139 each coordinate sn-glycerol 3-phosphate. Alanine 141 lines the NADPH pocket. Positions 192, 245, 255, 256, and 257 each coordinate sn-glycerol 3-phosphate. Catalysis depends on lysine 192, which acts as the Proton acceptor. Arginine 256 contacts NADPH. Glutamate 282 serves as a coordination point for NADPH.

Belongs to the NAD-dependent glycerol-3-phosphate dehydrogenase family.

It is found in the cytoplasm. The enzyme catalyses sn-glycerol 3-phosphate + NAD(+) = dihydroxyacetone phosphate + NADH + H(+). It carries out the reaction sn-glycerol 3-phosphate + NADP(+) = dihydroxyacetone phosphate + NADPH + H(+). It functions in the pathway membrane lipid metabolism; glycerophospholipid metabolism. Catalyzes the reduction of the glycolytic intermediate dihydroxyacetone phosphate (DHAP) to sn-glycerol 3-phosphate (G3P), the key precursor for phospholipid synthesis. This chain is Glycerol-3-phosphate dehydrogenase [NAD(P)+], found in Coxiella burnetii (strain CbuG_Q212) (Coxiella burnetii (strain Q212)).